A 178-amino-acid polypeptide reads, in one-letter code: Large ribosomal subunit protein uL5 (178 aa).

It belongs to the universal ribosomal protein uL5 family. Part of the 50S ribosomal subunit; contacts the 5S rRNA and probably tRNA. Forms a bridge to the 30S subunit in the 70S ribosome.

In terms of biological role, this is one of the proteins that bind and probably mediate the attachment of the 5S RNA into the large ribosomal subunit, where it forms part of the central protuberance. In the 70S ribosome it contacts protein S13 of the 30S subunit (bridge B1b), connecting the 2 subunits; this bridge is implicated in subunit movement. May contact the P site tRNA; the 5S rRNA and some of its associated proteins might help stabilize positioning of ribosome-bound tRNAs. The sequence is that of Large ribosomal subunit protein uL5 from Sulfolobus acidocaldarius (strain ATCC 33909 / DSM 639 / JCM 8929 / NBRC 15157 / NCIMB 11770).